We begin with the raw amino-acid sequence, 440 residues long: MAGIPHDHYEPKTGFERWLHRRLPIVSLVYDTLMIPTPKNLNWWWIWGIVLAFCLVLQIATGIVLVMHYTPHVDLAFASVEHIMRDVNGGYMLRYLHANGASLFFLAVYIHIFRGLYYGSYKAPREVTWIVGMLIYLMMMGTAFMGYVLPWGQMSFWGATVITGLFGAIPGVGEAIQTWLLGGPAVDNPTLNRFFSLHYLLPFVIAALVVVHIWAFHTTGNNNPTGVEVRRGSKEEAKKDTLPFWPYFVIKDLFALAVVLVVFFAIVGFMPNYLGHPDNYIEANPLVTPAHIVPEWYFLPFYAILRAFTADVWVVMLVNWLSFGIIDAKFFGVIAMFGAILVMALVPWLDTSRVRSGQYRPLFKWWFWLLAVDFVVLMWVGAMPAEGIYPYIALAGSAYWFAYFLIILPLLGIIEKPDAMPQTIEEDFNAHYGPETHPAE.

The chain crosses the membrane as a helical span at residues 46–66; sequence IWGIVLAFCLVLQIATGIVLV. His97 and His111 together coordinate heme b. 9 helical membrane passes run 100 to 120, 129 to 149, 156 to 176, 194 to 214, 253 to 273, 296 to 315, 330 to 350, 365 to 385, and 394 to 414; these read GASL…YYGS, WIVG…GYVL, FWGA…GEAI, FFSL…VHIW, LFAL…MPNY, WYFL…VWVV, FFGV…PWLD, WWFW…AMPA, and LAGS…LGII. Residues His198 and His212 each coordinate heme b.

It belongs to the cytochrome b family. In terms of assembly, the main subunits of complex b-c1 are: cytochrome b, cytochrome c1 and the Rieske protein. It depends on heme b as a cofactor.

The protein resides in the cell membrane. Functionally, component of the ubiquinol-cytochrome c reductase complex (complex III or cytochrome b-c1 complex), which is a respiratory chain that generates an electrochemical potential coupled to ATP synthesis. This chain is Cytochrome b (petB), found in Paracoccus denitrificans.